The following is a 476-amino-acid chain: ATP synthase subunit beta, mitochondrial (476 aa).

156–163 (GAGVGKTV) contacts ATP.

As to quaternary structure, F-type ATP synthases have 2 components, the catalytic core F(1) and the membrane-embedded component F(0), linked together by a central stalk and a peripheral stalk. The central stalk, also called rotor shaft, is often seen as part of F(1). The peripheral stalk is seen as part of F(0). F(0) contains the membrane channel next to the rotor. F-type ATP synthases form dimers but each monomer functions independently in ATP generation. The dimer consists of 18 different polypeptides: ATP1 (subunit alpha, part of F(1), 3 molecules per monomer), ATP2 (subunit beta, part of F(1), 3 molecules per monomer), ATP3 (subunit gamma, part of the central stalk), ATP4 (subunit b, part of the peripheral stalk), ATP5/OSCP (subunit 5/OSCP, part of the peripheral stalk), ATP6 (subunit a, part of the peripheral stalk), ATP7 (subunit d, part of the peripheral stalk), ATP8 (subunit 8, part of the peripheral stalk), OLI1 (subunit c, part of the rotor, 10 molecules per monomer), ATP14 (subunit h, part of the peripheral stalk), ATP15 (subunit epsilon, part of the central stalk), ATP16 (subunit delta, part of the central stalk), ATP17 (subunit f, part of the peripheral stalk), ATP18 (subunit i/j, part of the peripheral stalk). Dimer-specific subunits are ATP19 (subunit k, at interface between monomers), ATP20 (subunit g, at interface between monomers), TIM11 (subunit e, at interface between monomers). Also contains subunit L.

It is found in the mitochondrion inner membrane. The catalysed reaction is ATP + H2O + 4 H(+)(in) = ADP + phosphate + 5 H(+)(out). In terms of biological role, mitochondrial membrane ATP synthase (F(1)F(0) ATP synthase or Complex V) produces ATP from ADP in the presence of a proton gradient across the membrane which is generated by electron transport complexes of the respiratory chain. F-type ATP synthases consist of two structural domains, F(1) - containing the extramembraneous catalytic core, and F(0) - containing the membrane proton channel, linked together by a central stalk and a peripheral stalk. During catalysis, ATP synthesis in the catalytic domain of F(1) is coupled via a rotary mechanism of the central stalk subunits to proton translocation. Subunits alpha/ATP1 and beta/ATP2 form the catalytic core in F(1). Rotation of the central stalk against the surrounding alpha/ATP1(3)beta/ATP2(3) subunits leads to hydrolysis of ATP in three separate catalytic sites on the beta/ATP2 subunits. The sequence is that of ATP synthase subunit beta, mitochondrial from Pichia angusta (Yeast).